The chain runs to 208 residues: Urease accessory protein UreG 1 (208 aa).

14 to 21 (GPVGSGKT) is a binding site for GTP.

This sequence belongs to the SIMIBI class G3E GTPase family. UreG subfamily. As to quaternary structure, homodimer. UreD, UreF and UreG form a complex that acts as a GTP-hydrolysis-dependent molecular chaperone, activating the urease apoprotein by helping to assemble the nickel containing metallocenter of UreC. The UreE protein probably delivers the nickel.

The protein resides in the cytoplasm. Its function is as follows. Facilitates the functional incorporation of the urease nickel metallocenter. This process requires GTP hydrolysis, probably effectuated by UreG. This chain is Urease accessory protein UreG 1, found in Brucella ovis (strain ATCC 25840 / 63/290 / NCTC 10512).